Consider the following 120-residue polypeptide: NAD(P)H-quinone oxidoreductase subunit 3, chloroplastic (120 aa).

Helical transmembrane passes span 9 to 29 (IFWT…WISG), 64 to 84 (MFAL…PWAM), and 88 to 108 (VLGV…VVGL).

This sequence belongs to the complex I subunit 3 family. NDH is composed of at least 16 different subunits, 5 of which are encoded in the nucleus.

The protein resides in the plastid. It is found in the chloroplast thylakoid membrane. It catalyses the reaction a plastoquinone + NADH + (n+1) H(+)(in) = a plastoquinol + NAD(+) + n H(+)(out). It carries out the reaction a plastoquinone + NADPH + (n+1) H(+)(in) = a plastoquinol + NADP(+) + n H(+)(out). NDH shuttles electrons from NAD(P)H:plastoquinone, via FMN and iron-sulfur (Fe-S) centers, to quinones in the photosynthetic chain and possibly in a chloroplast respiratory chain. The immediate electron acceptor for the enzyme in this species is believed to be plastoquinone. Couples the redox reaction to proton translocation, and thus conserves the redox energy in a proton gradient. The polypeptide is NAD(P)H-quinone oxidoreductase subunit 3, chloroplastic (Lolium perenne (Perennial ryegrass)).